The chain runs to 215 residues: Extracellular small neutral protease (215 aa).

The N-terminal stretch at M1–A30 is a signal peptide. T152 is a Ca(2+) binding site. Residue H157 participates in Zn(2+) binding. The active site involves E158. Zn(2+)-binding residues include H161 and D167. A disulfide bond links C173 and C186.

Belongs to the peptidase M7 family. Zn(2+) serves as cofactor.

The protein resides in the secreted. The enzyme catalyses Hydrolyzes proteins with a preference for Tyr or Phe in the P1' position. Has no action on amino-acid p-nitroanilides.. The chain is Extracellular small neutral protease (snpA) from Streptomyces coelicolor.